The primary structure comprises 527 residues: Aspartokinase (527 aa).

Thr333 bears the Phosphothreonine mark. The region spanning 442-527 (LVGKHMKQYI…RLEQLKRLGI (86 aa)) is the ACT domain.

This sequence belongs to the aspartokinase family. In terms of assembly, homohexamer. Interacts with FPR1; the interaction is direct, plays a role in feedback inhibition of aspartokinase by threonine, and inhibited by tacrolimus and sirolimus.

The catalysed reaction is L-aspartate + ATP = 4-phospho-L-aspartate + ADP. The protein operates within amino-acid biosynthesis; L-methionine biosynthesis via de novo pathway; L-homoserine from L-aspartate: step 1/3. Its pathway is amino-acid biosynthesis; L-threonine biosynthesis; L-threonine from L-aspartate: step 1/5. With respect to regulation, allosterically inhibited by threonine. In terms of biological role, phosphorylates aspartate, the first step in the biosynthesis of amino acids that derive from aspartate (the aspartate family of amino acids), including methioinine and threonine, the latter of which is a precursor to isoleucine. The chain is Aspartokinase (HOM3) from Saccharomyces cerevisiae (strain ATCC 204508 / S288c) (Baker's yeast).